We begin with the raw amino-acid sequence, 205 residues long: LexA repressor (205 aa).

The segment at residues 28-48 (RAEIAKRLGFKSANAAEEHLK) is a DNA-binding region (H-T-H motif). Catalysis depends on for autocatalytic cleavage activity residues serine 122 and lysine 159.

The protein belongs to the peptidase S24 family. Homodimer.

The catalysed reaction is Hydrolysis of Ala-|-Gly bond in repressor LexA.. Functionally, represses a number of genes involved in the response to DNA damage (SOS response), including recA and lexA. In the presence of single-stranded DNA, RecA interacts with LexA causing an autocatalytic cleavage which disrupts the DNA-binding part of LexA, leading to derepression of the SOS regulon and eventually DNA repair. The chain is LexA repressor from Shewanella woodyi (strain ATCC 51908 / MS32).